The primary structure comprises 1207 residues: AP-3 complex subunit delta-1 (1207 aa).

Alanine 2 carries the N-acetylalanine modification. HEAT repeat units lie at residues 34–71 (KYIS…LGYD), 142–179 (DLAR…KYPE), 180–216 (SLRP…RNPK), 218–254 (YLSL…LEPR), 257–296 (KKLI…GMPN), 298–336 (SASI…THPK), 337–373 (SVQA…KKNL), 375–409 (EIVK…QSNY), and 521–558 (VYVQ…ERLP). Disordered regions lie at residues 630–695 (PLSD…RYQD) and 731–970 (RRHR…EEPL). Serine 632, serine 634, and serine 636 each carry phosphoserine. Residues 648 to 675 (EEQRHTKPRAPEADEQELARRREARRQE) are compositionally biased toward basic and acidic residues. The stretch at 659-679 (EADEQELARRREARRQEQANN) forms a coiled coil. Phosphoserine is present on serine 688. Residues 725–752 (VKLEEERRHRQRLEKDKRKKKKRERERR) are a coiled coil. Over residues 731–740 (RRHRQRLEKD) the composition is skewed to basic and acidic residues. Residues 741–759 (KRKKKKRERERRGTRRHSS) show a composition bias toward basic residues. Phosphoserine is present on residues serine 758 and serine 759. Threonine 762 carries the phosphothreonine modification. Phosphoserine occurs at positions 764, 788, and 829. Acidic residues predominate over residues 777-794 (VTEEMPENALPSDEDDKD). A compositionally biased stretch (basic and acidic residues) spans 795-840 (PNDPYRALDIDLDKPLADSEKLPVQKHRNAETSKSPEKEDVPLVEK). The span at 841–854 (KSKKPKKKEKKHKE) shows a compositional bias: basic residues. Residues 846–870 (KKKEKKHKEKEREKKKKEVEKGEDL) adopt a coiled-coil conformation. 2 stretches are compositionally biased toward basic and acidic residues: residues 855-869 (KERE…KGED) and 899-908 (EGQEEPRGEE). Basic residues predominate over residues 923–933 (PSKHKKKKHKK). Over residues 952 to 969 (ADEEAAEPVENGTLEEEP) the composition is skewed to acidic residues.

Belongs to the adaptor complexes large subunit family. AP-3 associates with the BLOC-1 complex. Adaptor protein complex 3 (AP-3) is a heterotetramer composed of two large adaptins (delta-type subunit AP3D1 and beta-type subunit AP3B1 or AP3B2), a medium adaptin (mu-type subunit AP3M1 or AP3M2) and a small adaptin (sigma-type subunit APS1 or AP3S2). Interacts with SLC30A2. Interacts with CLN3 (via dileucine motif); this interaction facilitates lysosomal targeting.

Its subcellular location is the cytoplasm. The protein localises to the golgi apparatus membrane. Part of the AP-3 complex, an adaptor-related complex which is not clathrin-associated. The complex is associated with the Golgi region as well as more peripheral structures. It facilitates the budding of vesicles from the Golgi membrane and may be directly involved in trafficking to lysosomes. Involved in process of CD8+ T-cell and NK cell degranulation. In concert with the BLOC-1 complex, AP-3 is required to target cargos into vesicles assembled at cell bodies for delivery into neurites and nerve terminals. The polypeptide is AP-3 complex subunit delta-1 (AP3D1) (Bos taurus (Bovine)).